A 549-amino-acid chain; its full sequence is Cation/acetate symporter ActP (549 aa).

The next 13 membrane-spanning stretches (helical) occupy residues 33–53 (WQAIIMFLIFVVFTLGITYWA), 77–97 (LAIAGDYMSAASFLGISALVF), 103–123 (GLIYSLGFLVGWPIILFLIAE), 148–168 (ILSACGSLVVVALYLIAQMVG), 183–203 (IAVVLVGVLMMMYVLFGGMLA), 206–226 (WVQIIKAVLLLFGASFMAFMV), 262–282 (ISALSLGLGLMFGTAGLPHIL), 303–323 (GFMGYFYILTFIIGFGAIMLV), 355–375 (LFLGFISAVAFATILAVVAGL), 404–424 (VSKITVLVLGVIAIILGVLFE), 428–448 (IAFMVGLAFAIAASCNFPIIL), 464–484 (GGWLGLLTAVVLMILGPTIWV), and 493–513 (IFPYEYPALFSISVAFLGIWF).

This sequence belongs to the sodium:solute symporter (SSF) (TC 2.A.21) family.

The protein localises to the cell inner membrane. Functionally, transports acetate. The protein is Cation/acetate symporter ActP of Salmonella arizonae (strain ATCC BAA-731 / CDC346-86 / RSK2980).